The chain runs to 226 residues: 7-cyano-7-deazaguanine synthase (226 aa).

I7–A17 serves as a coordination point for ATP. Zn(2+) contacts are provided by C187, C195, C198, and C201.

It belongs to the QueC family. The cofactor is Zn(2+).

It catalyses the reaction 7-carboxy-7-deazaguanine + NH4(+) + ATP = 7-cyano-7-deazaguanine + ADP + phosphate + H2O + H(+). It functions in the pathway purine metabolism; 7-cyano-7-deazaguanine biosynthesis. Its function is as follows. Catalyzes the ATP-dependent conversion of 7-carboxy-7-deazaguanine (CDG) to 7-cyano-7-deazaguanine (preQ(0)). The chain is 7-cyano-7-deazaguanine synthase from Chlorobium phaeobacteroides (strain BS1).